A 531-amino-acid polypeptide reads, in one-letter code: tRNA-2-methylthio-N(6)-dimethylallyladenosine synthase (531 aa).

The tract at residues methionine 1–leucine 26 is disordered. Positions threonine 15–leucine 26 are enriched in basic and acidic residues. The region spanning arginine 80 to methionine 198 is the MTTase N-terminal domain. Residues cysteine 89, cysteine 125, cysteine 159, cysteine 235, cysteine 239, and cysteine 242 each contribute to the [4Fe-4S] cluster site. The Radical SAM core domain maps to arginine 221–lysine 451. Positions lysine 454–asparagine 517 constitute a TRAM domain.

The protein belongs to the methylthiotransferase family. MiaB subfamily. In terms of assembly, monomer. Requires [4Fe-4S] cluster as cofactor.

The protein localises to the cytoplasm. It carries out the reaction N(6)-dimethylallyladenosine(37) in tRNA + (sulfur carrier)-SH + AH2 + 2 S-adenosyl-L-methionine = 2-methylsulfanyl-N(6)-dimethylallyladenosine(37) in tRNA + (sulfur carrier)-H + 5'-deoxyadenosine + L-methionine + A + S-adenosyl-L-homocysteine + 2 H(+). Functionally, catalyzes the methylthiolation of N6-(dimethylallyl)adenosine (i(6)A), leading to the formation of 2-methylthio-N6-(dimethylallyl)adenosine (ms(2)i(6)A) at position 37 in tRNAs that read codons beginning with uridine. The sequence is that of tRNA-2-methylthio-N(6)-dimethylallyladenosine synthase from Geobacillus kaustophilus (strain HTA426).